A 72-amino-acid chain; its full sequence is Translation initiation factor IF-1 2 (72 aa).

Positions 1-72 (MAKDDVIQMQ…SRARIVFRTK (72 aa)) constitute an S1-like domain.

Belongs to the IF-1 family. In terms of assembly, component of the 30S ribosomal translation pre-initiation complex which assembles on the 30S ribosome in the order IF-2 and IF-3, IF-1 and N-formylmethionyl-tRNA(fMet); mRNA recruitment can occur at any time during PIC assembly.

It localises to the cytoplasm. One of the essential components for the initiation of protein synthesis. Stabilizes the binding of IF-2 and IF-3 on the 30S subunit to which N-formylmethionyl-tRNA(fMet) subsequently binds. Helps modulate mRNA selection, yielding the 30S pre-initiation complex (PIC). Upon addition of the 50S ribosomal subunit IF-1, IF-2 and IF-3 are released leaving the mature 70S translation initiation complex. The protein is Translation initiation factor IF-1 2 of Cupriavidus metallidurans (strain ATCC 43123 / DSM 2839 / NBRC 102507 / CH34) (Ralstonia metallidurans).